Reading from the N-terminus, the 96-residue chain is UPF0235 protein NT01EI_0281 (96 aa).

It belongs to the UPF0235 family.

The chain is UPF0235 protein NT01EI_0281 from Edwardsiella ictaluri (strain 93-146).